A 122-amino-acid chain; its full sequence is Large ribosomal subunit protein uL14 (122 aa).

It belongs to the universal ribosomal protein uL14 family. As to quaternary structure, part of the 50S ribosomal subunit. Forms a cluster with proteins L3 and L19. In the 70S ribosome, L14 and L19 interact and together make contacts with the 16S rRNA in bridges B5 and B8.

Binds to 23S rRNA. Forms part of two intersubunit bridges in the 70S ribosome. This Rhodospirillum rubrum (strain ATCC 11170 / ATH 1.1.1 / DSM 467 / LMG 4362 / NCIMB 8255 / S1) protein is Large ribosomal subunit protein uL14.